Reading from the N-terminus, the 317-residue chain is Ribose-phosphate pyrophosphokinase (317 aa).

ATP contacts are provided by residues 41–43 (DME) and 100–101 (RQ). Residues histidine 134 and aspartate 174 each contribute to the Mg(2+) site. Residue lysine 197 is part of the active site. D-ribose 5-phosphate is bound by residues arginine 199, aspartate 223, and 227–231 (DSGGT).

The protein belongs to the ribose-phosphate pyrophosphokinase family. Class I subfamily. In terms of assembly, homohexamer. The cofactor is Mg(2+).

The protein resides in the cytoplasm. It carries out the reaction D-ribose 5-phosphate + ATP = 5-phospho-alpha-D-ribose 1-diphosphate + AMP + H(+). The protein operates within metabolic intermediate biosynthesis; 5-phospho-alpha-D-ribose 1-diphosphate biosynthesis; 5-phospho-alpha-D-ribose 1-diphosphate from D-ribose 5-phosphate (route I): step 1/1. In terms of biological role, involved in the biosynthesis of the central metabolite phospho-alpha-D-ribosyl-1-pyrophosphate (PRPP) via the transfer of pyrophosphoryl group from ATP to 1-hydroxyl of ribose-5-phosphate (Rib-5-P). This chain is Ribose-phosphate pyrophosphokinase, found in Bradyrhizobium diazoefficiens (strain JCM 10833 / BCRC 13528 / IAM 13628 / NBRC 14792 / USDA 110).